Reading from the N-terminus, the 338-residue chain is Fructose-1,6-bisphosphatase class 1 (338 aa).

Residues E91, D113, L115, and D116 each contribute to the Mg(2+) site. Substrate-binding positions include 116–119 (DGSS), N208, and K274. Residue E280 participates in Mg(2+) binding.

Belongs to the FBPase class 1 family. Homotetramer. The cofactor is Mg(2+).

Its subcellular location is the cytoplasm. The enzyme catalyses beta-D-fructose 1,6-bisphosphate + H2O = beta-D-fructose 6-phosphate + phosphate. Its pathway is carbohydrate biosynthesis; gluconeogenesis. This chain is Fructose-1,6-bisphosphatase class 1, found in Ralstonia nicotianae (strain ATCC BAA-1114 / GMI1000) (Ralstonia solanacearum).